The following is a 425-amino-acid chain: Cysteate synthase (425 aa).

An N6-(pyridoxal phosphate)lysine modification is found at Lys-106. Pyridoxal 5'-phosphate-binding residues include Asn-132 and Thr-382.

This sequence belongs to the threonine synthase family. Cysteate synthase subfamily. As to quaternary structure, homotrimer. The cofactor is pyridoxal 5'-phosphate.

The catalysed reaction is O-phospho-L-serine + sulfite + H(+) = L-cysteate + phosphate. Its pathway is cofactor biosynthesis; coenzyme M biosynthesis. Specifically catalyzes the beta-elimination of phosphate from L-phosphoserine and the beta-addition of sulfite to the dehydroalanine intermediate to produce L-cysteate. This Methanosphaerula palustris (strain ATCC BAA-1556 / DSM 19958 / E1-9c) protein is Cysteate synthase.